The primary structure comprises 261 residues: Succinate dehydrogenase iron-sulfur subunit (261 aa).

The 92-residue stretch at Arg-28–Met-119 folds into the 2Fe-2S ferredoxin-type domain. Cys-80, Cys-85, and Cys-100 together coordinate [2Fe-2S] cluster. In terms of domain architecture, 4Fe-4S ferredoxin-type spans Asp-161 to Tyr-191. Residues Cys-171, Cys-174, and Cys-177 each coordinate [4Fe-4S] cluster. Cys-181 provides a ligand contact to [3Fe-4S] cluster. Trp-186 lines the a ubiquinone pocket. [3Fe-4S] cluster is bound by residues Cys-228 and Cys-234. Cys-238 is a binding site for [4Fe-4S] cluster.

The protein belongs to the succinate dehydrogenase/fumarate reductase iron-sulfur protein family. As to quaternary structure, part of an enzyme complex containing four subunits: a flavoprotein, an iron-sulfur, cytochrome b-556, and a hydrophobic anchor protein. [2Fe-2S] cluster serves as cofactor. [3Fe-4S] cluster is required as a cofactor. Requires [4Fe-4S] cluster as cofactor.

The catalysed reaction is a quinone + succinate = fumarate + a quinol. It functions in the pathway carbohydrate metabolism; tricarboxylic acid cycle; fumarate from succinate (bacterial route): step 1/1. The sequence is that of Succinate dehydrogenase iron-sulfur subunit (sdhB) from Rickettsia typhi (strain ATCC VR-144 / Wilmington).